Consider the following 145-residue polypeptide: Trafficking protein particle complex subunit 1 (145 aa).

The protein belongs to the TRAPP small subunits family. BET5 subfamily. In terms of assembly, part of the multisubunit transport protein particle (TRAPP) complex. The heterodimer TRAPPC6B-TRAPPC3 interacts with TRAPPC1 likely providing a core for TRAPP complex formation.

The protein localises to the golgi apparatus. It is found in the cis-Golgi network. It localises to the endoplasmic reticulum. In terms of biological role, may play a role in vesicular transport from endoplasmic reticulum to Golgi. The sequence is that of Trafficking protein particle complex subunit 1 from Mus musculus (Mouse).